The primary structure comprises 248 residues: 14-3-3 protein homolog 2 (248 aa).

The protein belongs to the 14-3-3 family.

This Echinococcus granulosus (Hydatid tapeworm) protein is 14-3-3 protein homolog 2.